The chain runs to 301 residues: NADH-cytochrome b5 reductase 3 (301 aa).

A lipid anchor (N-myristoyl glycine) is attached at G2. An FAD-binding FR-type domain is found at D40 to Q152. Position 42 is an N6-acetyllysine (K42). Y43 bears the Phosphotyrosine mark. R92, P93, Y94, V109, K111, and F114 together coordinate FAD. N6-acetyllysine is present on K120. The FAD site is built by K126, M127, S128, and T185.

This sequence belongs to the flavoprotein pyridine nucleotide cytochrome reductase family. In terms of assembly, component of a complex composed of cytochrome b5, NADH-cytochrome b5 reductase (CYB5R3) and MTARC2. Interacts with MTLN; the interaction is required to maintain cellular lipid composition and leads to stimulation of mitochondrial respiratory complex I activity. It depends on FAD as a cofactor. As to expression, expressed at late stages of erythroid maturation.

Its subcellular location is the endoplasmic reticulum membrane. The protein localises to the mitochondrion outer membrane. The protein resides in the cytoplasm. The enzyme catalyses 2 Fe(III)-[cytochrome b5] + NADH = 2 Fe(II)-[cytochrome b5] + NAD(+) + H(+). In terms of biological role, catalyzes the reduction of two molecules of cytochrome b5 using NADH as the electron donor. This Homo sapiens (Human) protein is NADH-cytochrome b5 reductase 3.